A 530-amino-acid chain; its full sequence is G2/mitotic-specific cyclin-B (530 aa).

Residues A76–N152 are disordered. Residues P121 to P144 are compositionally biased toward low complexity. S137 carries the post-translational modification Phosphoserine.

The protein belongs to the cyclin family. Cyclin AB subfamily. As to quaternary structure, interacts with the protein kinase Cdk1 to form a serine/threonine kinase holoenzyme complex also known as maturation promoting factor (MPF). The cyclin subunit imparts substrate specificity to the complex.

Its function is as follows. Essential for the control of the cell cycle at the G2/M (mitosis) transition. This is G2/mitotic-specific cyclin-B (CycB) from Drosophila melanogaster (Fruit fly).